Reading from the N-terminus, the 204-residue chain is Recombination protein RecR (204 aa).

The C4-type zinc-finger motif lies at cysteine 58 to cysteine 75. The 99-residue stretch at threonine 83 to proline 181 folds into the Toprim domain.

This sequence belongs to the RecR family.

Functionally, may play a role in DNA repair. It seems to be involved in an RecBC-independent recombinational process of DNA repair. It may act with RecF and RecO. The sequence is that of Recombination protein RecR from Chlorobium luteolum (strain DSM 273 / BCRC 81028 / 2530) (Pelodictyon luteolum).